Consider the following 750-residue polypeptide: Signal transducer and activator of transcription 1-alpha/beta (750 aa).

At Ser-2 the chain carries N-acetylserine. 6 positions are modified to N6-methyllysine: Lys-114, Lys-175, Lys-296, Lys-366, Lys-525, and Lys-637. Residues 136 to 317 (LDKQKELDSK…LFQQLIQSSF (182 aa)) adopt a coiled-coil conformation. One can recognise an SH2 domain in the interval 573–670 (WNDGCIMGFI…ENPLKYLYPN (98 aa)). Glu-657 carries the ADP-ribosyl glutamic acid; by PARP14 modification. Residue Lys-665 is modified to N6-methyllysine. A Phosphotyrosine; by JAK1, JAK2 or TYK2 modification is found at Tyr-701. Residue Lys-703 forms a Glycyl lysine isopeptide (Lys-Gly) (interchain with G-Cter in SUMO1); alternate linkage. Lys-703 participates in a covalent cross-link: Glycyl lysine isopeptide (Lys-Gly) (interchain with G-Cter in SUMO2); alternate. Glu-705 bears the ADP-ribosyl glutamic acid; by PARP14 mark. The residue at position 708 (Ser-708) is a Phosphoserine; by IKKE. A Phosphoserine; by CAMK2 and MAPK14 modification is found at Ser-727. Ser-745 is modified (phosphoserine; by IKKE). Thr-749 is subject to Phosphothreonine; by IKKB.

This sequence belongs to the transcription factor STAT family. As to quaternary structure, isoform alpha homodimerizes upon IFN-gamma induced phosphorylation. Heterodimer with STAT2 upon IFN-alpha/beta induced phosphorylation. The heterodimer STAT1:STAT2 forms the interferon-stimulated gene factor 3 complex (ISGF3) with IRF9. Interacts (phosphorylated at Ser-727) with PIAS1; the interaction results in release of STAT1 from its target gene. Interacts with IFNAR1; the interaction requires the phosphorylation of IFNAR1 at 'Tyr-466'. Interacts with IFNAR2. Found in a complex with NMI and CREBBP/CBP. Interacts with NMI which is required for CREBBP/CBP recruitment to the complex. Interacts with PTK2/FAK1. Interacts with SRC. Interacts with ERBB4 (phosphorylated). Interacts with PARP9 and DTX3L independently of IFN-beta or IFN-gamma-mediated STAT1 'Tyr-701' phosphorylation. Interacts with histone acetyltransferase EP300/p300 in response to INF-gamma stimulation. Independently of its phosphorylation status, interacts with OTOP1. Interacts with IFNGR1. Interacts with STAT4. (Microbial infection) Interacts with Sendai virus C', C, Y1 and Y2 proteins, preventing activation of ISRE and GAS promoter. In terms of assembly, (Microbial infection) Interacts with Nipah virus P, V and W proteins preventing activation of ISRE and GAS promoter. As to quaternary structure, (Microbial infection) Interacts with Rabies virus phosphoprotein preventing activation of ISRE and GAS promoter. (Microbial infection) Interacts with HCV core protein; the interaction results in STAT1 degradation. In terms of assembly, (Microbial infection) Interacts with ebolavirus protein VP24. As to quaternary structure, (Microbial infection) Interacts with Epstein-Barr virus (EBV) tegument protein BGLF2; this interaction leads to STAT1 dephosphorylation and inhibition. (Microbial infection) Interacts (via N-terminus) with measles V protein; this interaction inhibits STAT1 phosphorylation by Jak1 and thereby the type I interferon signaling pathway. In terms of processing, deubiquitinated by USP13; leading to STAT1 stabilization and positive regulation of type I and type II IFN signalings. Post-translationally, phosphorylated on tyrosine and serine residues in response to a variety of cytokines/growth hormones including IFN-alpha, IFN-gamma, PDGF and EGF. Activated KIT promotes phosphorylation on tyrosine residues and subsequent translocation to the nucleus. Upon EGF stimulation, phosphorylation on Tyr-701 (lacking in beta form) by JAK1, JAK2 or TYK2 promotes dimerization and subsequent translocation to the nucleus. Growth hormone (GH) activates STAT1 signaling only via JAK2. Tyrosine phosphorylated in response to constitutively activated FGFR1, FGFR2, FGFR3 and FGFR4. Phosphorylation on Ser-727 by several kinases including MAPK14, ERK1/2, CAMK2/CAMKII and CK2 in response to IFN-gamma stimulation, is required for maximal transcriptional activity. Phosphorylated on Ser-727 by CAMK2/CAMKII in response to IFN-gamma stimulation and calcium mobilization, promoting activity. Phosphorylated by CAMK2/CAMKII in response to IFN-beta stimulation and calcium mobilization in epithelial cells, promoting activity. Phosphorylation on Ser-727 promotes sumoylation though increasing interaction with PIAS. Phosphorylation on Ser-727 by PRKCD induces apoptosis in response to DNA-damaging agents. Phosphorylated on tyrosine residues when PTK2/FAK1 is activated; most likely this is catalyzed by a SRC family kinase. Dephosphorylation on tyrosine residues by PTPN2 negatively regulates interferon-mediated signaling. Upon viral infection or IFN induction, phosphorylation on Ser-708 occurs much later than phosphorylation on Tyr-701 and is required for the binding of ISGF3 on the ISREs of a subset of IFN-stimulated genes IKBKE-dependent. Phosphorylation at Tyr-701 and Ser-708 are mutually exclusive, phosphorylation at Ser-708 requires previous dephosphorylation of Tyr-701. Phosphorylation at Thr-749 by IKBKB/IKKB promotes transcriptional activation of ARID5A and IL12B by STAT1. Phosphorylation at Thr-749 restricts interferon signaling and anti-inflammatory responses and promotes innate inflammatory responses. Sumoylated with SUMO1, SUMO2 and SUMO3. Sumoylation is enhanced by IFN-gamma-induced phosphorylation on Ser-727, and by interaction with PIAS proteins. Enhances the transactivation activity. In terms of processing, ISGylated. Post-translationally, mono-ADP-ribosylated at Glu-657 and Glu-705 by PARP14; ADP-ribosylation prevents phosphorylation at Tyr-701. However, the role of ADP-ribosylation in the prevention of phosphorylation has been called into question and the lack of phosphorylation may be due to sumoylation of Lys-703. Monomethylated at Lys-525 by SETD2; monomethylation is necessary for phosphorylation at Tyr-701, translocation into the nucleus and activation of the antiviral defense. In terms of processing, (Microbial infection) Ubiquitinated by Herpes simplex virus 2 E3 ubiquitin ligase ICP22.

It localises to the cytoplasm. The protein resides in the nucleus. Its function is as follows. Signal transducer and transcription activator that mediates cellular responses to interferons (IFNs), cytokine KITLG/SCF and other cytokines and other growth factors. Following type I IFN (IFN-alpha and IFN-beta) binding to cell surface receptors, signaling via protein kinases leads to activation of Jak kinases (TYK2 and JAK1) and to tyrosine phosphorylation of STAT1 and STAT2. The phosphorylated STATs dimerize and associate with ISGF3G/IRF-9 to form a complex termed ISGF3 transcription factor, that enters the nucleus. ISGF3 binds to the IFN stimulated response element (ISRE) to activate the transcription of IFN-stimulated genes (ISG), which drive the cell in an antiviral state. In response to type II IFN (IFN-gamma), STAT1 is tyrosine- and serine-phosphorylated. It then forms a homodimer termed IFN-gamma-activated factor (GAF), migrates into the nucleus and binds to the IFN gamma activated sequence (GAS) to drive the expression of the target genes, inducing a cellular antiviral state. Becomes activated in response to KITLG/SCF and KIT signaling. May mediate cellular responses to activated FGFR1, FGFR2, FGFR3 and FGFR4. Following bacterial lipopolysaccharide (LPS)-induced TLR4 endocytosis, phosphorylated at Thr-749 by IKBKB which promotes binding of STAT1 to the 5'-TTTGAGGC-3' sequence in the ARID5A promoter, resulting in transcriptional activation of ARID5A and subsequent ARID5A-mediated stabilization of IL6. Phosphorylation at Thr-749 also promotes binding of STAT1 to the 5'-TTTGAGTC-3' sequence in the IL12B promoter and activation of IL12B transcription. Involved in food tolerance in small intestine: associates with the Gasdermin-D, p13 cleavage product (13 kDa GSDMD) and promotes transcription of CIITA, inducing type 1 regulatory T (Tr1) cells in upper small intestine. The polypeptide is Signal transducer and activator of transcription 1-alpha/beta (STAT1) (Homo sapiens (Human)).